The primary structure comprises 442 residues: 3-phosphoshikimate 1-carboxyvinyltransferase (442 aa).

Positions 1-11 are enriched in polar residues; the sequence is MQVSRPLTVSA. The tract at residues 1–25 is disordered; it reads MQVSRPLTVSASPKGLSGRTRVPGD. 3 residues coordinate 3-phosphoshikimate: K26, S27, and R31. K26 serves as a coordination point for phosphoenolpyruvate. Residues G98 and R126 each contribute to the phosphoenolpyruvate site. S171, Q173, D324, and K351 together coordinate 3-phosphoshikimate. Q173 contributes to the phosphoenolpyruvate binding site. The active-site Proton acceptor is D324. 2 residues coordinate phosphoenolpyruvate: R355 and R398.

Belongs to the EPSP synthase family. In terms of assembly, monomer.

The protein resides in the cytoplasm. The catalysed reaction is 3-phosphoshikimate + phosphoenolpyruvate = 5-O-(1-carboxyvinyl)-3-phosphoshikimate + phosphate. Its pathway is metabolic intermediate biosynthesis; chorismate biosynthesis; chorismate from D-erythrose 4-phosphate and phosphoenolpyruvate: step 6/7. Functionally, catalyzes the transfer of the enolpyruvyl moiety of phosphoenolpyruvate (PEP) to the 5-hydroxyl of shikimate-3-phosphate (S3P) to produce enolpyruvyl shikimate-3-phosphate and inorganic phosphate. This is 3-phosphoshikimate 1-carboxyvinyltransferase from Gluconobacter oxydans (strain 621H) (Gluconobacter suboxydans).